The sequence spans 589 residues: tRNA (guanine(26)-N(2))-dimethyltransferase 2 (589 aa).

Residues 9–465 form the Trm1 methyltransferase domain; it reads TVIKEGEAEI…APMEVIWDIM (457 aa). Residue arginine 36 coordinates S-adenosyl-L-methionine. Residues 51-122 form a disordered region; sequence KQEHEAKSSK…RFAPREPKPP (72 aa). Basic and acidic residues-rich tracts occupy residues 68 to 81 and 106 to 122; these read VIEKDASEASKEET and DPAKTTERFAPREPKPP. S-adenosyl-L-methionine contacts are provided by arginine 134, aspartate 152, and valine 185. Residues cysteine 315, cysteine 318, cysteine 350, and cysteine 353 each coordinate Zn(2+). Residues 550 to 589 are disordered; sequence LSQHHEELKEEDEEAEPEDNVQDKVDPKRQKTATDNITST. Residues 558 to 569 show a composition bias toward acidic residues; that stretch reads KEEDEEAEPEDN.

It belongs to the class I-like SAM-binding methyltransferase superfamily. Trm1 family.

It catalyses the reaction guanosine(26) in tRNA + 2 S-adenosyl-L-methionine = N(2)-dimethylguanosine(26) in tRNA + 2 S-adenosyl-L-homocysteine + 2 H(+). In terms of biological role, dimethylates a single guanine residue at position 26 of most tRNAs using S-adenosyl-L-methionine as donor of the methyl groups. The polypeptide is tRNA (guanine(26)-N(2))-dimethyltransferase 2 (Arabidopsis thaliana (Mouse-ear cress)).